Here is a 388-residue protein sequence, read N- to C-terminus: Putative 8-amino-7-oxononanoate synthase (388 aa).

Arginine 22 contributes to the substrate binding site. 109–110 lines the pyridoxal 5'-phosphate pocket; that stretch reads GY. Histidine 134 provides a ligand contact to substrate. Pyridoxal 5'-phosphate is bound by residues serine 182, 207 to 210, and 237 to 240; these read DEAH and TLSK. N6-(pyridoxal phosphate)lysine is present on lysine 240. Threonine 354 contributes to the substrate binding site.

This sequence belongs to the class-II pyridoxal-phosphate-dependent aminotransferase family. BioF subfamily. In terms of assembly, homodimer. Pyridoxal 5'-phosphate serves as cofactor.

The enzyme catalyses 6-carboxyhexanoyl-[ACP] + L-alanine + H(+) = (8S)-8-amino-7-oxononanoate + holo-[ACP] + CO2. Its pathway is cofactor biosynthesis; biotin biosynthesis. Catalyzes the decarboxylative condensation of pimeloyl-[acyl-carrier protein] and L-alanine to produce 8-amino-7-oxononanoate (AON), [acyl-carrier protein], and carbon dioxide. This chain is Putative 8-amino-7-oxononanoate synthase (bioF), found in Gloeobacter violaceus (strain ATCC 29082 / PCC 7421).